Consider the following 72-residue polypeptide: Sec-independent protein translocase protein TatA (72 aa).

A helical membrane pass occupies residues 1–21 (MPFGLGLPEILVIGVIALLIF). Residues 41 to 72 (KSGVSDEPAPQQSASKETAPNPPQSLPSGKDS) form a disordered region.

This sequence belongs to the TatA/E family. Forms a complex with TatC.

It is found in the cell inner membrane. Part of the twin-arginine translocation (Tat) system that transports large folded proteins containing a characteristic twin-arginine motif in their signal peptide across membranes. TatA could form the protein-conducting channel of the Tat system. In Gloeobacter violaceus (strain ATCC 29082 / PCC 7421), this protein is Sec-independent protein translocase protein TatA.